The chain runs to 548 residues: Eukaryotic translation initiation factor 3 subunit D (548 aa).

An N6-acetyllysine modification is found at Lys-53. Position 161 is a phosphoserine (Ser-161). Positions 285–299 (DFDLLTVSETANEPP) are RNA gate. The segment at 523-548 (PDGTFSSDEDDEEEEEEEEEEEEEEA) is disordered. Ser-528 and Ser-529 each carry phosphoserine. Acidic residues predominate over residues 529–548 (SDEDDEEEEEEEEEEEEEEA).

The protein belongs to the eIF-3 subunit D family. As to quaternary structure, component of the eukaryotic translation initiation factor 3 (eIF-3) complex, which is composed of 13 subunits: EIF3A, EIF3B, EIF3C, EIF3D, EIF3E, EIF3F, EIF3G, EIF3H, EIF3I, EIF3J, EIF3K, EIF3L and EIF3M. The eIF-3 complex appears to include 3 stable modules: module A is composed of EIF3A, EIF3B, EIF3G and EIF3I; module B is composed of EIF3F, EIF3H, and EIF3M; and module C is composed of EIF3C, EIF3D, EIF3E, EIF3K and EIF3L. EIF3C of module C binds EIF3B of module A and EIF3H of module B, thereby linking the three modules. EIF3J is a labile subunit that binds to the eIF-3 complex via EIF3B. The eIF-3 complex interacts with RPS6KB1 under conditions of nutrient depletion. Mitogenic stimulation leads to binding and activation of a complex composed of MTOR and RPTOR, leading to phosphorylation and release of RPS6KB1 and binding of EIF4B to eIF-3.

The protein localises to the cytoplasm. In terms of biological role, mRNA cap-binding component of the eukaryotic translation initiation factor 3 (eIF-3) complex, a complex required for several steps in the initiation of protein synthesis of a specialized repertoire of mRNAs. The eIF-3 complex associates with the 40S ribosome and facilitates the recruitment of eIF-1, eIF-1A, eIF-2:GTP:methionyl-tRNAi and eIF-5 to form the 43S pre-initiation complex (43S PIC). The eIF-3 complex stimulates mRNA recruitment to the 43S PIC and scanning of the mRNA for AUG recognition. The eIF-3 complex is also required for disassembly and recycling of post-termination ribosomal complexes and subsequently prevents premature joining of the 40S and 60S ribosomal subunits prior to initiation. The eIF-3 complex specifically targets and initiates translation of a subset of mRNAs involved in cell proliferation, including cell cycling, differentiation and apoptosis, and uses different modes of RNA stem-loop binding to exert either translational activation or repression. In the eIF-3 complex, EIF3D specifically recognizes and binds the 7-methylguanosine cap of a subset of mRNAs. This chain is Eukaryotic translation initiation factor 3 subunit D, found in Bos taurus (Bovine).